The chain runs to 444 residues: Phosphoribosylamine--glycine ligase (444 aa).

The ATP-grasp domain maps to 109-324; sequence RNLFKKYEID…FLDVCFAIAE (216 aa). Residue 140–202 coordinates ATP; sequence MTSLGKDVVV…EEKLVGVEFT (63 aa). Mg(2+)-binding residues include glutamine 282, glutamate 294, and asparagine 296. Residues glutamine 282, glutamate 294, and asparagine 296 each contribute to the Mn(2+) site.

The protein belongs to the GARS family. Mg(2+) is required as a cofactor. Mn(2+) serves as cofactor.

It carries out the reaction 5-phospho-beta-D-ribosylamine + glycine + ATP = N(1)-(5-phospho-beta-D-ribosyl)glycinamide + ADP + phosphate + H(+). It participates in purine metabolism; IMP biosynthesis via de novo pathway; N(1)-(5-phospho-D-ribosyl)glycinamide from 5-phospho-alpha-D-ribose 1-diphosphate: step 2/2. This chain is Phosphoribosylamine--glycine ligase, found in Methanococcus maripaludis (strain DSM 14266 / JCM 13030 / NBRC 101832 / S2 / LL).